Consider the following 68-residue polypeptide: Large ribosomal subunit protein uL30 (68 aa).

It belongs to the universal ribosomal protein uL30 family. Part of the 50S ribosomal subunit.

The polypeptide is Large ribosomal subunit protein uL30 (Bartonella tribocorum (strain CIP 105476 / IBS 506)).